A 156-amino-acid chain; its full sequence is Inner membrane protein YlaC (156 aa).

Over 1–35 (MTEIQRLLTETIESLNTREKRDNKPRFSISFIRKH) the chain is Cytoplasmic. A helical membrane pass occupies residues 36-56 (PGLFIGMYVAFFATLAVMLQS). At 57–58 (ET) the chain is on the periplasmic side. The chain crosses the membrane as a helical span at residues 59-79 (LSGSVWLLVVLFILLNGFFFF). Topologically, residues 80-156 (DVYPRYRYED…FTLARAESTS (77 aa)) are cytoplasmic.

The protein resides in the cell inner membrane. The chain is Inner membrane protein YlaC (ylaC) from Escherichia coli (strain K12).